A 379-amino-acid chain; its full sequence is UDP-4-amino-4-deoxy-L-arabinose--oxoglutarate aminotransferase (379 aa).

Position 182 is an N6-(pyridoxal phosphate)lysine (K182).

This sequence belongs to the DegT/DnrJ/EryC1 family. ArnB subfamily. Homodimer. Pyridoxal 5'-phosphate is required as a cofactor.

The catalysed reaction is UDP-4-amino-4-deoxy-beta-L-arabinose + 2-oxoglutarate = UDP-beta-L-threo-pentopyranos-4-ulose + L-glutamate. It functions in the pathway nucleotide-sugar biosynthesis; UDP-4-deoxy-4-formamido-beta-L-arabinose biosynthesis; UDP-4-deoxy-4-formamido-beta-L-arabinose from UDP-alpha-D-glucuronate: step 2/3. The protein operates within bacterial outer membrane biogenesis; lipopolysaccharide biosynthesis. Functionally, catalyzes the conversion of UDP-4-keto-arabinose (UDP-Ara4O) to UDP-4-amino-4-deoxy-L-arabinose (UDP-L-Ara4N). The modified arabinose is attached to lipid A and is required for resistance to polymyxin and cationic antimicrobial peptides. The sequence is that of UDP-4-amino-4-deoxy-L-arabinose--oxoglutarate aminotransferase from Shigella flexneri.